Here is a 225-residue protein sequence, read N- to C-terminus: Large ribosomal subunit protein uL4 (225 aa).

The disordered stretch occupies residues 46-102 (KRQGTHATKGRGEVRGGGRKPFRQKGTGRARQGSIRAPHFTGGGTVHGPQPRDYSQR). Over residues 62 to 73 (GGRKPFRQKGTG) the composition is skewed to basic residues.

The protein belongs to the universal ribosomal protein uL4 family. As to quaternary structure, part of the 50S ribosomal subunit.

Functionally, one of the primary rRNA binding proteins, this protein initially binds near the 5'-end of the 23S rRNA. It is important during the early stages of 50S assembly. It makes multiple contacts with different domains of the 23S rRNA in the assembled 50S subunit and ribosome. In terms of biological role, forms part of the polypeptide exit tunnel. This Corynebacterium urealyticum (strain ATCC 43042 / DSM 7109) protein is Large ribosomal subunit protein uL4.